We begin with the raw amino-acid sequence, 177 residues long: Large ribosomal subunit protein uL6 (177 aa).

As to quaternary structure, part of the 50S ribosomal subunit.

This protein binds to the 23S rRNA, and is important in its secondary structure. It is located near the subunit interface in the base of the L7/L12 stalk, and near the tRNA binding site of the peptidyltransferase center. The chain is Large ribosomal subunit protein uL6 from Rhodopseudomonas palustris (strain ATCC BAA-98 / CGA009).